A 207-amino-acid chain; its full sequence is Uracil phosphoribosyltransferase (207 aa).

Residues R77, R102, and 129-137 contribute to the 5-phospho-alpha-D-ribose 1-diphosphate site; that span reads DPMLATGGS. Residues I192 and 197–199 each bind uracil; that span reads GDA. D198 is a 5-phospho-alpha-D-ribose 1-diphosphate binding site.

The protein belongs to the UPRTase family. Requires Mg(2+) as cofactor.

The enzyme catalyses UMP + diphosphate = 5-phospho-alpha-D-ribose 1-diphosphate + uracil. It participates in pyrimidine metabolism; UMP biosynthesis via salvage pathway; UMP from uracil: step 1/1. Allosterically activated by GTP. Its function is as follows. Catalyzes the conversion of uracil and 5-phospho-alpha-D-ribose 1-diphosphate (PRPP) to UMP and diphosphate. This is Uracil phosphoribosyltransferase from Mycobacterium marinum (strain ATCC BAA-535 / M).